The chain runs to 513 residues: ATP synthase subunit alpha (513 aa).

Position 169 to 176 (169 to 176 (GDRQTGKT)) interacts with ATP.

The protein belongs to the ATPase alpha/beta chains family. F-type ATPases have 2 components, CF(1) - the catalytic core - and CF(0) - the membrane proton channel. CF(1) has five subunits: alpha(3), beta(3), gamma(1), delta(1), epsilon(1). CF(0) has three main subunits: a(1), b(2) and c(9-12). The alpha and beta chains form an alternating ring which encloses part of the gamma chain. CF(1) is attached to CF(0) by a central stalk formed by the gamma and epsilon chains, while a peripheral stalk is formed by the delta and b chains.

It is found in the cell inner membrane. The catalysed reaction is ATP + H2O + 4 H(+)(in) = ADP + phosphate + 5 H(+)(out). Its function is as follows. Produces ATP from ADP in the presence of a proton gradient across the membrane. The alpha chain is a regulatory subunit. This Shewanella sp. (strain MR-4) protein is ATP synthase subunit alpha.